A 105-amino-acid chain; its full sequence is Pyrimidine/purine nucleoside phosphorylase (105 aa).

This sequence belongs to the nucleoside phosphorylase PpnP family.

The catalysed reaction is a purine D-ribonucleoside + phosphate = a purine nucleobase + alpha-D-ribose 1-phosphate. It catalyses the reaction adenosine + phosphate = alpha-D-ribose 1-phosphate + adenine. The enzyme catalyses cytidine + phosphate = cytosine + alpha-D-ribose 1-phosphate. It carries out the reaction guanosine + phosphate = alpha-D-ribose 1-phosphate + guanine. The catalysed reaction is inosine + phosphate = alpha-D-ribose 1-phosphate + hypoxanthine. It catalyses the reaction thymidine + phosphate = 2-deoxy-alpha-D-ribose 1-phosphate + thymine. The enzyme catalyses uridine + phosphate = alpha-D-ribose 1-phosphate + uracil. It carries out the reaction xanthosine + phosphate = alpha-D-ribose 1-phosphate + xanthine. Functionally, catalyzes the phosphorolysis of diverse nucleosides, yielding D-ribose 1-phosphate and the respective free bases. Can use uridine, adenosine, guanosine, cytidine, thymidine, inosine and xanthosine as substrates. Also catalyzes the reverse reactions. The protein is Pyrimidine/purine nucleoside phosphorylase of Albidiferax ferrireducens (strain ATCC BAA-621 / DSM 15236 / T118) (Rhodoferax ferrireducens).